The sequence spans 391 residues: Chaperone protein DnaJ (391 aa).

One can recognise a J domain in the interval Asp-2–Gly-67. A CR-type zinc finger spans residues Gly-148–Lys-226. The Zn(2+) site is built by Cys-161, Cys-164, Cys-178, Cys-181, Cys-200, Cys-203, Cys-214, and Cys-217. CXXCXGXG motif repeat units follow at residues Cys-161–Gly-168, Cys-178–Gly-185, Cys-200–Gly-207, and Cys-214–Gly-221.

It belongs to the DnaJ family. Homodimer. The cofactor is Zn(2+).

It localises to the cytoplasm. Participates actively in the response to hyperosmotic and heat shock by preventing the aggregation of stress-denatured proteins and by disaggregating proteins, also in an autonomous, DnaK-independent fashion. Unfolded proteins bind initially to DnaJ; upon interaction with the DnaJ-bound protein, DnaK hydrolyzes its bound ATP, resulting in the formation of a stable complex. GrpE releases ADP from DnaK; ATP binding to DnaK triggers the release of the substrate protein, thus completing the reaction cycle. Several rounds of ATP-dependent interactions between DnaJ, DnaK and GrpE are required for fully efficient folding. Also involved, together with DnaK and GrpE, in the DNA replication of plasmids through activation of initiation proteins. The protein is Chaperone protein DnaJ of Chlamydia abortus (strain DSM 27085 / S26/3) (Chlamydophila abortus).